Consider the following 492-residue polypeptide: Catalase isozyme 1 (492 aa).

Active-site residues include H65 and N138. Y348 is a binding site for heme.

Belongs to the catalase family. Homotetramer. It depends on heme as a cofactor.

The protein localises to the peroxisome. It catalyses the reaction 2 H2O2 = O2 + 2 H2O. In terms of biological role, occurs in almost all aerobically respiring organisms and serves to protect cells from the toxic effects of hydrogen peroxide. The chain is Catalase isozyme 1 (CAT1) from Gossypium hirsutum (Upland cotton).